The primary structure comprises 317 residues: Probable cell division protein WhiA (317 aa).

The H-T-H motif DNA-binding region spans 281–314 (TLKELGEMINPPIGKSGVNHRLRKLDQIADRERG).

Belongs to the WhiA family.

Involved in cell division and chromosome segregation. In Alkaliphilus metalliredigens (strain QYMF), this protein is Probable cell division protein WhiA.